Here is a 156-residue protein sequence, read N- to C-terminus: MPRKGHVAKPEVLPDPIYNSKLVTSLINHLMLDGKRGTASKILYQALDQIKEQTGNDPIEVFEQAMENIKPALEVKARRIGGSNYQVPIEVRPDRQRTLALRWLVQYARLRGEHTMVERLSGEIIDASNNTGASIKKKEDTLRMAEANRAFAHYRW.

This sequence belongs to the universal ribosomal protein uS7 family. Part of the 30S ribosomal subunit. Contacts proteins S9 and S11.

Its function is as follows. One of the primary rRNA binding proteins, it binds directly to 16S rRNA where it nucleates assembly of the head domain of the 30S subunit. Is located at the subunit interface close to the decoding center, probably blocks exit of the E-site tRNA. In Limosilactobacillus fermentum (strain NBRC 3956 / LMG 18251) (Lactobacillus fermentum), this protein is Small ribosomal subunit protein uS7.